Here is a 95-residue protein sequence, read N- to C-terminus: Co-chaperonin GroES (95 aa).

This sequence belongs to the GroES chaperonin family. Heptamer of 7 subunits arranged in a ring. Interacts with the chaperonin GroEL.

The protein localises to the cytoplasm. Together with the chaperonin GroEL, plays an essential role in assisting protein folding. The GroEL-GroES system forms a nano-cage that allows encapsulation of the non-native substrate proteins and provides a physical environment optimized to promote and accelerate protein folding. GroES binds to the apical surface of the GroEL ring, thereby capping the opening of the GroEL channel. This chain is Co-chaperonin GroES, found in Nitratidesulfovibrio vulgaris (strain ATCC 29579 / DSM 644 / CCUG 34227 / NCIMB 8303 / VKM B-1760 / Hildenborough) (Desulfovibrio vulgaris).